A 616-amino-acid chain; its full sequence is MRLAIKRRASRGQRPGPDEKRARDMEKARPQWGNPLQFVFACISYAVGLGNVWRFPYLCQMYGGGSFLVPYLIMLIVEGMPLLYLELAVGQRMRQGSIGAWRTISPYLSGVGVASVVVSFFLSMYYNVINAWGFWYLFHSFQDPLPWSVCPLNSNRTGYDEECEKASSTQYFWYRKTLNISPSIQENGGVQWEPALCLTLAWLMVYLCILRGTESTGKVVYFTALMPYCVLIIYLVRGLTLHGATNGLMYMFTPKIEQLANPKAWINAATQIFFSLGLGFGSLIAFASYNEPSNDCQKHAVIVSVINSSTSIFASIVTFSIYGFKATFNYENCLNKVILLLTNSFDLEDGFLTASNLEEVKDYLASTYPNKYSEVFPHIRNCSLESELNTAVQGTGLAFIVYAEAIKNMEVSQLWSVLYFFMLLMLGMGSMLGNTAAILTPLTDSKVISSYLPKEAISGLVCLINCAVGMVFTMEAGNYWFDIFNDYAATLSLLLIVLVETIAVCYVYGLRRFESDLRAMTGRPLNWYWKAMWAFVSPLLIIGLFIFYLSDYILTGTLQYQAWDATQGQLVTKDYPPHALAVIGLLVASSTMCIPLVALGTFIRNRLKRGGSSPVA.

The segment covering 1–11 (MRLAIKRRASR) has biased composition (basic residues). Positions 1–26 (MRLAIKRRASRGQRPGPDEKRARDME) are disordered. Over 1-37 (MRLAIKRRASRGQRPGPDEKRARDMEKARPQWGNPLQ) the chain is Cytoplasmic. The segment covering 16–26 (GPDEKRARDME) has biased composition (basic and acidic residues). A helical transmembrane segment spans residues 38-58 (FVFACISYAVGLGNVWRFPYL). The Extracellular segment spans residues 59-66 (CQMYGGGS). A helical membrane pass occupies residues 67–87 (FLVPYLIMLIVEGMPLLYLEL). Topologically, residues 88-103 (AVGQRMRQGSIGAWRT) are cytoplasmic. A helical membrane pass occupies residues 104–124 (ISPYLSGVGVASVVVSFFLSM). The Extracellular segment spans residues 125-189 (YYNVINAWGF…ISPSIQENGG (65 aa)). N-linked (GlcNAc...) asparagine glycosylation is present at asparagine 155. A helical membrane pass occupies residues 190–210 (VQWEPALCLTLAWLMVYLCIL). The Cytoplasmic segment spans residues 211 to 218 (RGTESTGK). A helical transmembrane segment spans residues 219 to 239 (VVYFTALMPYCVLIIYLVRGL). At 240–265 (TLHGATNGLMYMFTPKIEQLANPKAW) the chain is on the extracellular side. A helical membrane pass occupies residues 266-286 (INAATQIFFSLGLGFGSLIAF). Over 287-300 (ASYNEPSNDCQKHA) the chain is Cytoplasmic. A helical transmembrane segment spans residues 301–321 (VIVSVINSSTSIFASIVTFSI). At 322-413 (YGFKATFNYE…EAIKNMEVSQ (92 aa)) the chain is on the extracellular side. N-linked (GlcNAc...) asparagine glycosylation occurs at asparagine 381. The helical transmembrane segment at 414–434 (LWSVLYFFMLLMLGMGSMLGN) threads the bilayer. The Cytoplasmic portion of the chain corresponds to 435–455 (TAAILTPLTDSKVISSYLPKE). Residues 456 to 476 (AISGLVCLINCAVGMVFTMEA) traverse the membrane as a helical segment. At 477-489 (GNYWFDIFNDYAA) the chain is on the extracellular side. The helical transmembrane segment at 490–510 (TLSLLLIVLVETIAVCYVYGL) threads the bilayer. Topologically, residues 511 to 533 (RRFESDLRAMTGRPLNWYWKAMW) are cytoplasmic. The chain crosses the membrane as a helical span at residues 534-554 (AFVSPLLIIGLFIFYLSDYIL). Residues 555–578 (TGTLQYQAWDATQGQLVTKDYPPH) are Extracellular-facing. The helical transmembrane segment at 579–599 (ALAVIGLLVASSTMCIPLVAL) threads the bilayer. Topologically, residues 600–616 (GTFIRNRLKRGGSSPVA) are cytoplasmic.

It belongs to the sodium:neurotransmitter symporter (SNF) (TC 2.A.22) family. SLC6A20 subfamily. In terms of tissue distribution, highly expressed in epithelial cells of duodenum, jejunum, ileum, stomach, cecum, colon and kidney proximal tubule. Also expressed in the choroid plexus, microglia and meniges of the brain and in the ovary.

The protein resides in the apical cell membrane. The catalysed reaction is L-proline(out) + chloride(out) + 2 Na(+)(out) = L-proline(in) + chloride(in) + 2 Na(+)(in). The enzyme catalyses 4-hydroxy-L-proline(out) + chloride(out) + 2 Na(+)(out) = 4-hydroxy-L-proline(in) + chloride(in) + 2 Na(+)(in). It catalyses the reaction 2-methyl-2-(methylamino)propanoate(out) + chloride(out) + 2 Na(+)(out) = 2-methyl-2-(methylamino)propanoate(in) + chloride(in) + 2 Na(+)(in). It carries out the reaction L-pipecolate(out) + chloride(out) + 2 Na(+)(out) = L-pipecolate(in) + chloride(in) + 2 Na(+)(in). The catalysed reaction is glycine betaine(out) + chloride(out) + 2 Na(+)(out) = glycine betaine(in) + chloride(in) + 2 Na(+)(in). The enzyme catalyses glycine(out) + chloride(out) + 2 Na(+)(out) = glycine(in) + chloride(in) + 2 Na(+)(in). Mediates the Na(+)- and Cl(-)-dependent uptake of imino acids such as L-proline, N-methyl-L-proline and pipecolate as well as N-methylated amino acids. Also transports glycine, regulates proline and glycine homeostasis in the brain playing a role in the modulation of NMDAR currents. The polypeptide is Sodium- and chloride-dependent transporter XTRP3 (Rattus norvegicus (Rat)).